A 188-amino-acid chain; its full sequence is Peptidyl-tRNA hydrolase (188 aa).

Phenylalanine 15 contributes to the tRNA binding site. Histidine 20 functions as the Proton acceptor in the catalytic mechanism. TRNA is bound by residues tyrosine 64, asparagine 66, and asparagine 112.

Belongs to the PTH family. As to quaternary structure, monomer.

Its subcellular location is the cytoplasm. It carries out the reaction an N-acyl-L-alpha-aminoacyl-tRNA + H2O = an N-acyl-L-amino acid + a tRNA + H(+). Functionally, hydrolyzes ribosome-free peptidyl-tRNAs (with 1 or more amino acids incorporated), which drop off the ribosome during protein synthesis, or as a result of ribosome stalling. Catalyzes the release of premature peptidyl moieties from peptidyl-tRNA molecules trapped in stalled 50S ribosomal subunits, and thus maintains levels of free tRNAs and 50S ribosomes. The sequence is that of Peptidyl-tRNA hydrolase from Borreliella burgdorferi (strain ATCC 35210 / DSM 4680 / CIP 102532 / B31) (Borrelia burgdorferi).